The primary structure comprises 399 residues: Dual-specificity RNA methyltransferase RlmN (399 aa).

Residue Glu122 is the Proton acceptor of the active site. Residues 128–371 (ETDRGTLCVS…VRTPRGRDIL (244 aa)) form the Radical SAM core domain. An intrachain disulfide couples Cys135 to Cys374. [4Fe-4S] cluster is bound by residues Cys142, Cys146, and Cys149. S-adenosyl-L-methionine-binding positions include 200–201 (GE), Ser232, 254–256 (SLH), and Asn331. Cys374 (S-methylcysteine intermediate) is an active-site residue.

This sequence belongs to the radical SAM superfamily. RlmN family. The cofactor is [4Fe-4S] cluster.

It localises to the cytoplasm. It catalyses the reaction adenosine(2503) in 23S rRNA + 2 reduced [2Fe-2S]-[ferredoxin] + 2 S-adenosyl-L-methionine = 2-methyladenosine(2503) in 23S rRNA + 5'-deoxyadenosine + L-methionine + 2 oxidized [2Fe-2S]-[ferredoxin] + S-adenosyl-L-homocysteine. The enzyme catalyses adenosine(37) in tRNA + 2 reduced [2Fe-2S]-[ferredoxin] + 2 S-adenosyl-L-methionine = 2-methyladenosine(37) in tRNA + 5'-deoxyadenosine + L-methionine + 2 oxidized [2Fe-2S]-[ferredoxin] + S-adenosyl-L-homocysteine. Specifically methylates position 2 of adenine 2503 in 23S rRNA and position 2 of adenine 37 in tRNAs. m2A2503 modification seems to play a crucial role in the proofreading step occurring at the peptidyl transferase center and thus would serve to optimize ribosomal fidelity. This Rhodopseudomonas palustris (strain BisB18) protein is Dual-specificity RNA methyltransferase RlmN.